The following is a 175-amino-acid chain: Ribosome maturation factor RimM (175 aa).

The PRC barrel domain occupies 99–172 (EGEFHLLDLV…WLRLTPPPGL (74 aa)).

Belongs to the RimM family. Binds ribosomal protein uS19.

The protein resides in the cytoplasm. In terms of biological role, an accessory protein needed during the final step in the assembly of 30S ribosomal subunit, possibly for assembly of the head region. Essential for efficient processing of 16S rRNA. May be needed both before and after RbfA during the maturation of 16S rRNA. It has affinity for free ribosomal 30S subunits but not for 70S ribosomes. This is Ribosome maturation factor RimM from Synechococcus sp. (strain WH7803).